Consider the following 499-residue polypeptide: 3-beta-hydroxylase (499 aa).

The chain crosses the membrane as a helical; Signal-anchor for type II membrane protein span at residues phenylalanine 2–isoleucine 22. Cysteine 441 serves as a coordination point for heme.

The protein belongs to the cytochrome P450 family. The cofactor is heme.

It localises to the membrane. The catalysed reaction is (+)-costunolide + reduced [NADPH--hemoprotein reductase] + O2 = 3beta-hydroxycostunolide + oxidized [NADPH--hemoprotein reductase] + H2O + H(+). It carries out the reaction parthenolide + reduced [NADPH--hemoprotein reductase] + O2 = 3beta-hydroxyparthenolide + oxidized [NADPH--hemoprotein reductase] + H2O + H(+). Its pathway is secondary metabolite biosynthesis; terpenoid biosynthesis. Its function is as follows. Involved in the biosynthesis of germacrene-derived sesquiterpene lactones. Component of the parthenolide biosynthetic pathway; parthenolide and conjugates are promising anti-cancer drugs highly active against colon cancer cells. Catalyzes the conversion of costunolide and parthenolide to 3-beta-hydroxycostunolide and 3-beta-hydroxyparthenolide, respectively. The sequence is that of 3-beta-hydroxylase from Tanacetum parthenium (Feverfew).